A 543-amino-acid polypeptide reads, in one-letter code: uncharacterized protein (543 aa).

The TRAM domain maps to 1–59; the sequence is MLKKNDIVEVEIVDLTHEGAGVAKVDGLVFFVENALPSEKILMRVLKVNKKIGFGKVEK. Residues Gln-283, Tyr-312, Glu-333, and Asp-381 each coordinate S-adenosyl-L-methionine. The Nucleophile role is filled by Cys-408.

This sequence belongs to the class I-like SAM-binding methyltransferase superfamily. RNA M5U methyltransferase family.

This is an uncharacterized protein from Streptococcus pneumoniae serotype 4 (strain ATCC BAA-334 / TIGR4).